Consider the following 214-residue polypeptide: uncharacterized protein (214 aa).

7 consecutive transmembrane segments (helical) span residues 4–23, 35–57, 67–89, 96–118, 128–150, 155–177, and 187–209; these read VSIV…FSSF, SFVH…LGYY, QWMR…FLFT, VSLV…VHVY, ARVM…VSFS, LPLL…SATV, and TVVY…FFAV.

It is found in the cell membrane. This is an uncharacterized protein from Treponema pallidum (strain Nichols).